A 495-amino-acid chain; its full sequence is MAVNVRDYIAENYGLFINGEFVKGSSDETIEVTNPATGETLSHITRAKDKDVDHAVKVAQDAFESWSLTSKSERAQMLRDIGDKLMAQKDKIAMIETLNNGKPIRETTAIDIPFAARHFHYFASVIETEEGTVNDIDKDTMSIVRHEPIGVVGAVVAWNFPMLLAAWKIAPAIAAGNTIVIQPSSSTPLSLLEVAKIFQEVLPKGVVNILTGKGSESGNAIFNHDGVDKLSFTGSTDVGYQVAEAAAKHLVPATLELGGKSANIILDDANLDLAVEGIQLGILFNQGEVCSAGSRLLVHEKIYDQLVPRLQEAFSNIKVGDPQDEATQMGSQTGKDQLDKIQSYIDAAKESDAQILAGGHRLTENGLDKGFFFEPTLIAVPDNHHKLAQEEIFGPVLTVIKVKDDQEAIDIANDSEYGLAGGVFSQNITRALNIAKAVRTGRIWINTYNQVPEGAPFGGYKKSGIGRETYKGALSNYQQVKNIYIDTSNALKGLY.

Residue 212–218 coordinates NAD(+); it reads GKGSESG. Catalysis depends on residues E256 and C290.

The protein belongs to the aldehyde dehydrogenase family.

It catalyses the reaction an aldehyde + NAD(+) + H2O = a carboxylate + NADH + 2 H(+). The chain is Putative aldehyde dehydrogenase AldA (aldA) from Staphylococcus aureus (strain MSSA476).